Here is a 119-residue protein sequence, read N- to C-terminus: Putative nitrilase-like protein YIL165C (119 aa).

The CN hydrolase domain maps to 1–82 (MKNIAYEGRL…EGLLTAEINT (82 aa)). The active-site Proton acceptor is the Asp-21.

Belongs to the carbon-nitrogen hydrolase superfamily. Nitrilase family.

In Saccharomyces cerevisiae (strain ATCC 204508 / S288c) (Baker's yeast), this protein is Putative nitrilase-like protein YIL165C.